The chain runs to 230 residues: MSSSGVITQLVTDALSMNAAQDWEDVSLFTPYLNDQALMYDFADCLAVQTFLRMTSLPFNVRQRPNVDFISPDGVVPLLKINKTLITGFNAIVDFVHKKGVTLTSHLSETQVADMRANISMIEHLLTTVEKFVLWNHDETYDKVTKLRYGSVYHWPLSSVLPFVKRRKILEELSDKDWDTKTMDEVGEQADKVFRALSAQLGSQKYLTGDLPTEADALLFGHMYTLITVR.

The protein belongs to the metaxin family. In terms of assembly, associates with the mitochondrial contact site and cristae organizing system (MICOS) complex (also known as MINOS or MitOS complex).

The protein localises to the mitochondrion outer membrane. In terms of biological role, involved in transport of proteins into the mitochondrion. The chain is Metaxin-2 homolog (mtx-2) from Caenorhabditis elegans.